Reading from the N-terminus, the 161-residue chain is 2-C-methyl-D-erythritol 2,4-cyclodiphosphate synthase (161 aa).

Aspartate 10 and histidine 12 together coordinate a divalent metal cation. Residues 10 to 12 (DVH) and 36 to 37 (HS) contribute to the 4-CDP-2-C-methyl-D-erythritol 2-phosphate site. A divalent metal cation is bound at residue histidine 44. Residues 58–60 (DIG), 63–67 (FSDTD), and arginine 144 contribute to the 4-CDP-2-C-methyl-D-erythritol 2-phosphate site.

Belongs to the IspF family. Homotrimer. Requires a divalent metal cation as cofactor.

It catalyses the reaction 4-CDP-2-C-methyl-D-erythritol 2-phosphate = 2-C-methyl-D-erythritol 2,4-cyclic diphosphate + CMP. The protein operates within isoprenoid biosynthesis; isopentenyl diphosphate biosynthesis via DXP pathway; isopentenyl diphosphate from 1-deoxy-D-xylulose 5-phosphate: step 4/6. Functionally, involved in the biosynthesis of isopentenyl diphosphate (IPP) and dimethylallyl diphosphate (DMAPP), two major building blocks of isoprenoid compounds. Catalyzes the conversion of 4-diphosphocytidyl-2-C-methyl-D-erythritol 2-phosphate (CDP-ME2P) to 2-C-methyl-D-erythritol 2,4-cyclodiphosphate (ME-CPP) with a corresponding release of cytidine 5-monophosphate (CMP). The chain is 2-C-methyl-D-erythritol 2,4-cyclodiphosphate synthase from Burkholderia ambifaria (strain ATCC BAA-244 / DSM 16087 / CCUG 44356 / LMG 19182 / AMMD) (Burkholderia cepacia (strain AMMD)).